Consider the following 337-residue polypeptide: Protein ABHD13 (337 aa).

The chain crosses the membrane as a helical; Signal-anchor for type II membrane protein span at residues 30–50; sequence LLALILTFHLYGGFVLLGLIL. Residues Ser-193, Asp-268, and His-298 each act as charge relay system in the active site. An N-linked (GlcNAc...) asparagine glycan is attached at Asn-299.

Belongs to the serine esterase family.

Its subcellular location is the membrane. The chain is Protein ABHD13 from Danio rerio (Zebrafish).